Reading from the N-terminus, the 338-residue chain is Solute carrier family 35 member G5 (338 aa).

Positions 1-21 (MAGSHPYFNLPDSTHPSPPSA) are disordered. A run of 9 helical transmembrane segments spans residues 37–57 (TNGL…VGPL), 67–87 (LPSL…ALPL), 105–125 (CFCA…VQVV), 160–180 (CGLL…LWTL), 190–210 (ALGY…LLVY), 221–241 (TVAF…LFVL), 250–270 (LLSW…FTCV), 281–301 (LVCA…YYVL), and 305–325 (VAPF…IITA). The EamA 1 domain maps to 49 to 174 (LPAGFVGPLS…SILGLIIIVG (126 aa)). One can recognise an EamA 2 domain in the interval 272–325 (YAVTKAHPALVCAVLHSEVVVALILQYYVLHETVAPFDITGAGIVLGSIAIITA).

Belongs to the SLC35G solute transporter family.

The protein resides in the membrane. This Pan paniscus (Pygmy chimpanzee) protein is Solute carrier family 35 member G5 (SLC35G5).